Consider the following 82-residue polypeptide: MVFLLCFFLVADVSYGINGDCELPKVVGPCRARFPRYYYNSSSKRCEKFIYGGCGGNANNFHTLEECEKVCGVRSRDSPKEN.

The N-terminal stretch at 1 to 16 (MVFLLCFFLVADVSYG) is a signal peptide. The 51-residue stretch at 21–71 (CELPKVVGPCRARFPRYYYNSSSKRCEKFIYGGCGGNANNFHTLEECEKVC) folds into the BPTI/Kunitz inhibitor domain. Disulfide bonds link C21–C71, C30–C54, and C46–C67. Residues 76-82 (RDSPKEN) constitute a propeptide that is removed on maturation.

It belongs to the venom Kunitz-type family. Sea anemone type 2 potassium channel toxin subfamily.

The protein localises to the secreted. Its subcellular location is the nematocyst. In terms of biological role, serine protease inhibitor that inhibits both tissue and plasma kallikreins. Has hemolytic activity. Inhibits voltage-gated potassium channels (Kv). This chain is KappaPI-actitoxin-Avd3e, found in Anemonia viridis (Snakelocks anemone).